A 185-amino-acid chain; its full sequence is MGQQVLKFSNEKMEKAVAAYSRELATVRAGRASASVLDKVQVDYYGAPTPVVQLANITVPEARLLVIQPYDKTSIGDIEKAILKADLGLNPSNDGTVIRIAFPALTEERRRDLVKVVKKYAEEAKVAVRNVRRDGNDDLKKLEKAGEITEDDLRGYTEDIQKETDKYIAKVDEIAKNKEKEIMEV.

This sequence belongs to the RRF family.

The protein localises to the cytoplasm. Functionally, responsible for the release of ribosomes from messenger RNA at the termination of protein biosynthesis. May increase the efficiency of translation by recycling ribosomes from one round of translation to another. This is Ribosome-recycling factor from Bacillus anthracis (strain A0248).